Reading from the N-terminus, the 292-residue chain is NAD kinase (292 aa).

The Proton acceptor role is filled by D73. NAD(+) contacts are provided by residues 73 to 74 (DG), 147 to 148 (NE), H158, R175, D177, 188 to 193 (TAYSLS), and Q247.

It belongs to the NAD kinase family. A divalent metal cation is required as a cofactor.

Its subcellular location is the cytoplasm. The catalysed reaction is NAD(+) + ATP = ADP + NADP(+) + H(+). Involved in the regulation of the intracellular balance of NAD and NADP, and is a key enzyme in the biosynthesis of NADP. Catalyzes specifically the phosphorylation on 2'-hydroxyl of the adenosine moiety of NAD to yield NADP. The protein is NAD kinase of Photorhabdus laumondii subsp. laumondii (strain DSM 15139 / CIP 105565 / TT01) (Photorhabdus luminescens subsp. laumondii).